We begin with the raw amino-acid sequence, 721 residues long: Translation initiation factor eIF2B subunit epsilon (721 aa).

Over residues 1–13 (MAAPVVAPPGVVV) the composition is skewed to low complexity. The disordered stretch occupies residues 1–40 (MAAPVVAPPGVVVSRANKRSGAGPGGSGGGGARGAEEEPP). N-acetylalanine is present on Ala2. At Arg19 the chain carries Omega-N-methylarginine. The span at 22-33 (AGPGGSGGGGAR) shows a compositional bias: gly residues. Ser27 bears the Phosphoserine mark. Glycyl lysine isopeptide (Lys-Gly) (interchain with G-Cter in ubiquitin) cross-links involve residues Lys61 and Lys103. Ser130 carries the phosphoserine modification. Residues Lys141 and Lys217 each participate in a glycyl lysine isopeptide (Lys-Gly) (interchain with G-Cter in ubiquitin) cross-link. Thr322 is modified (phosphothreonine). Disordered regions lie at residues 444–483 (PEGSVISLHPPDAEEDEDDGEFSDDSGADQEKDKVKMKGY) and 523–547 (EESESESEQSMDSEEPDSRGGSPQM). A phosphoserine mark is found at Ser450, Ser466, Ser469, Ser532, and Ser540. 2 stretches are compositionally biased toward acidic residues: residues 456-471 (AEEDEDDGEFSDDSGA) and 523-537 (EESESESEQSMDSEE). The 178-residue stretch at 543-720 (GSPQMDDIKV…KEAEEESSED (178 aa)) folds into the W2 domain. Ser544 carries the post-translational modification Phosphoserine; by DYRK2. At Ser717 the chain carries Phosphoserine.

It belongs to the eIF-2B gamma/epsilon subunits family. Component of the translation initiation factor 2B (eIF2B) complex which is a heterodecamer of two sets of five different subunits: alpha, beta, gamma, delta and epsilon. Subunits alpha, beta and delta comprise a regulatory subcomplex and subunits epsilon and gamma comprise a catalytic subcomplex. Within the complex, the hexameric regulatory complex resides at the center, with the two heterodimeric catalytic subcomplexes bound on opposite sides. Post-translationally, phosphorylated at Ser-544 by DYRK2; this is required for subsequent phosphorylation by GSK3B. Phosphorylated on serine and threonine residues by GSK3B; phosphorylation inhibits its function. Polyubiquitinated, probably by NEDD4.

The protein localises to the cytoplasm. It is found in the cytosol. Activated by the chemical integrated stress response (ISR) inhibitor ISRIB which stimulates guanine nucleotide exchange factor activity for both phosphorylated and unphosphorylated eIF2. In terms of biological role, acts as a component of the translation initiation factor 2B (eIF2B) complex, which catalyzes the exchange of GDP for GTP on eukaryotic initiation factor 2 (eIF2) gamma subunit. Its guanine nucleotide exchange factor activity is repressed when bound to eIF2 complex phosphorylated on the alpha subunit, thereby limiting the amount of methionyl-initiator methionine tRNA available to the ribosome and consequently global translation is repressed. This Homo sapiens (Human) protein is Translation initiation factor eIF2B subunit epsilon (EIF2B5).